We begin with the raw amino-acid sequence, 304 residues long: Nod factor export ATP-binding protein I (304 aa).

The ABC transporter domain maps to 6 to 236 (IDLAGVKKSF…HIGCQVIEIF (231 aa)). 38 to 45 (GPNGAGKS) provides a ligand contact to ATP.

This sequence belongs to the ABC transporter superfamily. Lipooligosaccharide exporter (TC 3.A.1.102) family. In terms of assembly, the complex is composed of two ATP-binding proteins (NodI) and two transmembrane proteins (NodJ).

Its subcellular location is the cell inner membrane. Functionally, part of the ABC transporter complex NodIJ involved in the export of the nodulation factors (Nod factors), the bacterial signal molecules that induce symbiosis and subsequent nodulation induction. Nod factors are LCO (lipo-chitin oligosaccharide), a modified beta-1,4-linked N-acetylglucosamine oligosaccharide. This subunit is responsible for energy coupling to the transport system. The chain is Nod factor export ATP-binding protein I from Rhizobium sp. (strain N33).